The primary structure comprises 158 residues: C-type lectin (158 aa).

A signal peptide spans 1-23; that stretch reads MWQFTVVSLGWLAVFLSLSGAKG. 3 disulfide bridges follow: C26/C37, C54/C154, and C129/C146. One can recognise a C-type lectin domain in the interval 33–155; that stretch reads RNGVCNKLFP…CASLHPFICQ (123 aa). The Mannose-binding motif lies at 119-121; that stretch reads EPN. E127, N142, and D143 together coordinate Ca(2+).

It belongs to the true venom lectin family. As to expression, expressed by the venom gland.

It is found in the secreted. Functionally, mannose-binding lectin which recognizes specific carbohydrate structures and agglutinates a variety of animal cells by binding to cell-surface glycoproteins and glycolipids. May be a calcium-dependent lectin. The chain is C-type lectin from Cerberus rynchops (Dog-faced water snake).